A 198-amino-acid polypeptide reads, in one-letter code: Dephospho-CoA kinase (198 aa).

The region spanning 4–198 (RIGLTGGIAS…CGLRADGTTW (195 aa)) is the DPCK domain. An ATP-binding site is contributed by 12 to 17 (ASGKSS).

The protein belongs to the CoaE family.

Its subcellular location is the cytoplasm. It carries out the reaction 3'-dephospho-CoA + ATP = ADP + CoA + H(+). The protein operates within cofactor biosynthesis; coenzyme A biosynthesis; CoA from (R)-pantothenate: step 5/5. Its function is as follows. Catalyzes the phosphorylation of the 3'-hydroxyl group of dephosphocoenzyme A to form coenzyme A. This Parasynechococcus marenigrum (strain WH8102) protein is Dephospho-CoA kinase.